The sequence spans 324 residues: Alkanal monooxygenase beta chain (324 aa).

The protein belongs to the bacterial luciferase oxidoreductase family. Heterodimer of an alpha and a beta chain.

It catalyses the reaction a long-chain fatty aldehyde + FMNH2 + O2 = a long-chain fatty acid + hnu + FMN + H2O + 2 H(+). Light-emitting reaction in luminous bacteria. The specific role of the beta subunit is unknown, but it is absolutely required for bioluminescence activity. This Vibrio harveyi (Beneckea harveyi) protein is Alkanal monooxygenase beta chain (luxB).